Reading from the N-terminus, the 354-residue chain is UDP-N-acetylglucosamine--N-acetylmuramyl-(pentapeptide) pyrophosphoryl-undecaprenol N-acetylglucosamine transferase (354 aa).

Residues 13–15, Asn125, Arg161, Ser189, Ile242, 261–266, and Gln286 each bind UDP-N-acetyl-alpha-D-glucosamine; these read SGG and ALTVSE.

The protein belongs to the glycosyltransferase 28 family. MurG subfamily.

The protein resides in the cell inner membrane. It catalyses the reaction di-trans,octa-cis-undecaprenyl diphospho-N-acetyl-alpha-D-muramoyl-L-alanyl-D-glutamyl-meso-2,6-diaminopimeloyl-D-alanyl-D-alanine + UDP-N-acetyl-alpha-D-glucosamine = di-trans,octa-cis-undecaprenyl diphospho-[N-acetyl-alpha-D-glucosaminyl-(1-&gt;4)]-N-acetyl-alpha-D-muramoyl-L-alanyl-D-glutamyl-meso-2,6-diaminopimeloyl-D-alanyl-D-alanine + UDP + H(+). It functions in the pathway cell wall biogenesis; peptidoglycan biosynthesis. Functionally, cell wall formation. Catalyzes the transfer of a GlcNAc subunit on undecaprenyl-pyrophosphoryl-MurNAc-pentapeptide (lipid intermediate I) to form undecaprenyl-pyrophosphoryl-MurNAc-(pentapeptide)GlcNAc (lipid intermediate II). The protein is UDP-N-acetylglucosamine--N-acetylmuramyl-(pentapeptide) pyrophosphoryl-undecaprenol N-acetylglucosamine transferase of Buchnera aphidicola subsp. Schizaphis graminum (strain Sg).